A 253-amino-acid chain; its full sequence is HTH-type transcriptional regulator YdeO (253 aa).

Residues 137–233 (GKVRNIVNMK…GNSPKRVSKE (97 aa)) form the HTH araC/xylS-type domain. DNA-binding regions (H-T-H motif) lie at residues 154–175 (KDICDCLYISESLLKKKLKQEQ) and 200–223 (VNKIAEQCGYASTSYFIYAFRKHF).

Functionally, induces the expression of gadE and mdtEF. Could also regulate the expression of other genes involved in acid resistance. In Escherichia coli O157:H7, this protein is HTH-type transcriptional regulator YdeO.